We begin with the raw amino-acid sequence, 309 residues long: uncharacterized protein (309 aa).

One can recognise an RPE1 insert domain in the interval 9–55; that stretch reads NFLYNIANKDGFKGYKECRTSAYKNVFDDSSTKSTSKFHLGISDTKN. A helical transmembrane segment spans residues 62 to 82; that stretch reads IIGLILIIFAGVLFYAYILQH.

It belongs to the LicD transferase family.

It localises to the membrane. This is an uncharacterized protein from Rickettsia typhi (strain ATCC VR-144 / Wilmington).